A 409-amino-acid chain; its full sequence is Arginine deiminase (409 aa).

Cys-398 serves as the catalytic Amidino-cysteine intermediate.

This sequence belongs to the arginine deiminase family.

Its subcellular location is the cytoplasm. The enzyme catalyses L-arginine + H2O = L-citrulline + NH4(+). It participates in amino-acid degradation; L-arginine degradation via ADI pathway; carbamoyl phosphate from L-arginine: step 1/2. The sequence is that of Arginine deiminase from Metamycoplasma arthritidis (strain 158L3-1) (Mycoplasma arthritidis).